Reading from the N-terminus, the 160-residue chain is 6,7-dimethyl-8-ribityllumazine synthase (160 aa).

Residues Trp-26, 58 to 60 (AIE), and 80 to 82 (VVI) each bind 5-amino-6-(D-ribitylamino)uracil. 85-86 (ET) lines the (2S)-2-hydroxy-3-oxobutyl phosphate pocket. The Proton donor role is filled by His-88. Asn-113 is a 5-amino-6-(D-ribitylamino)uracil binding site. Residue Arg-127 participates in (2S)-2-hydroxy-3-oxobutyl phosphate binding.

The protein belongs to the DMRL synthase family. As to quaternary structure, homopentamer.

The catalysed reaction is (2S)-2-hydroxy-3-oxobutyl phosphate + 5-amino-6-(D-ribitylamino)uracil = 6,7-dimethyl-8-(1-D-ribityl)lumazine + phosphate + 2 H2O + H(+). It participates in cofactor biosynthesis; riboflavin biosynthesis; riboflavin from 2-hydroxy-3-oxobutyl phosphate and 5-amino-6-(D-ribitylamino)uracil: step 1/2. In terms of biological role, catalyzes the formation of 6,7-dimethyl-8-ribityllumazine by condensation of 5-amino-6-(D-ribitylamino)uracil with 3,4-dihydroxy-2-butanone 4-phosphate. This is the penultimate step in the biosynthesis of riboflavin. The sequence is that of 6,7-dimethyl-8-ribityllumazine synthase from Mycobacteroides abscessus (strain ATCC 19977 / DSM 44196 / CCUG 20993 / CIP 104536 / JCM 13569 / NCTC 13031 / TMC 1543 / L948) (Mycobacterium abscessus).